The sequence spans 185 residues: ATP synthase subunit b, chloroplastic (185 aa).

The chain crosses the membrane as a helical span at residues 7–29; that stretch reads SFVYLVGHCPFAGSFAFNTDILA.

This sequence belongs to the ATPase B chain family. As to quaternary structure, F-type ATPases have 2 components, F(1) - the catalytic core - and F(0) - the membrane proton channel. F(1) has five subunits: alpha(3), beta(3), gamma(1), delta(1), epsilon(1). F(0) has four main subunits: a(1), b(1), b'(1) and c(10-14). The alpha and beta chains form an alternating ring which encloses part of the gamma chain. F(1) is attached to F(0) by a central stalk formed by the gamma and epsilon chains, while a peripheral stalk is formed by the delta, b and b' chains.

It localises to the plastid. The protein resides in the chloroplast thylakoid membrane. Its function is as follows. F(1)F(0) ATP synthase produces ATP from ADP in the presence of a proton or sodium gradient. F-type ATPases consist of two structural domains, F(1) containing the extramembraneous catalytic core and F(0) containing the membrane proton channel, linked together by a central stalk and a peripheral stalk. During catalysis, ATP synthesis in the catalytic domain of F(1) is coupled via a rotary mechanism of the central stalk subunits to proton translocation. Component of the F(0) channel, it forms part of the peripheral stalk, linking F(1) to F(0). The sequence is that of ATP synthase subunit b, chloroplastic from Dioscorea elephantipes (Elephant's foot yam).